The primary structure comprises 422 residues: uncharacterized protein (422 aa).

Residues 1–22 form a disordered region; it reads MIQNNPKSIGSSSNKSARSSGS. Positions 7-22 are enriched in low complexity; the sequence is KSIGSSSNKSARSSGS.

This is an uncharacterized protein from Acanthamoeba polyphaga mimivirus (APMV).